Consider the following 989-residue polypeptide: MEPPAAKRSRGCPAGPEERDAGAGAARGRGRPEALLDLSAKRVAESWAFEQVEERFSRVPEPVQKRIVFWSFPRSEREICMYSSLGYPPPEGEHDARVPFTRGLHLLQSGAVDRVLQVGFHLSGNIREPGSPGEPERLYHVSISFDRCKITSVSCGCDNRDLFYCAHVVALSLYRIRHAHQVELRLPISETLSQMNRDQLQKFVQYLISAHHTEVLPTAQRLADEILLLGSEINLVNGAPDPTAGAGIEDANCWHLDEEQIQEQVKQLLSNGGYYGASQQLRSMFSKVREMLRMRDSNGARMLILMTEQFLQDTRLALWRQQGAGMTDKCRQLWDELGALWVCVVLSPHCKPEERAGWLQLLSRWDKLDVCPLEEGNYSFDGPSLQPTMAPAPELLQKGSTCITNTEGWVGHPLDPIGCLCRALLEACRLEEETLTLYPDSGPEKRKVAYQHVPVPGSPGESYLVLALEVALLGLGQQRALPEGLYAQDKVVRNEEQLLALLEEVELDERLVQVLRKQAGLLLEGGPFSGFGEVLFRESVPMHTCARYLFTALLPHDPDLAYRLALRAMRLPILETAFPAGEPHPSPLDSIMSNRFPRWFILGHLETRQCELASTMLTAAKGDPKWLHTVLGSIQQNIHSPALLFKLAQDACKTATPVSAPPDTTLLGIALELGLQVMRMTLNVMTWRRREMVRWLVSCATEIGPQALMNIMQNWYSLFTPVEAATIVAVTGTTHATLLRLQLDTSRREELWACARTLALQCAMKDPQNCALPALTLCEKNHSAFEAAYQIVLDAAAGGLGHAHLFTVARYMEHRGLPLRAYKLATLALAQLSIAFNQDSHPAVNDVLWACSLSHSLGRHELSAIVPLIIRSIHCAPMLSDILRRWTLSAPGLGPLGARRAAKPLGADRAPLCQLLDAAVTAYITTSHSRLTHISPRHYGDFIEFLGKARETFLLAPDGHLQFSQFLENLKQTYKGKKKLMLLVRERFG.

Positions 1 to 32 are disordered; it reads MEPPAAKRSRGCPAGPEERDAGAGAARGRGRP. The segment at 139–176 adopts an SWIM-type zinc-finger fold; that stretch reads YHVSISFDRCKITSVSCGCDNRDLFYCAHVVALSLYRI.

The protein is Zinc finger SWIM domain-containing protein 4 (ZSWIM4) of Homo sapiens (Human).